Reading from the N-terminus, the 344-residue chain is Thioredoxin domain-containing protein 15 (344 aa).

The first 20 residues, 1 to 20 (MQLLCWWQVLLWVLGLPAHG), serve as a signal peptide directing secretion. The Extracellular segment spans residues 21–305 (LEVAEDSGHP…GPLPSTLIKT (285 aa)). Disordered stretches follow at residues 55 to 119 (DHRD…FGLQ) and 136 to 156 (GVTEAEPVATEDANSTDSLKS). Basic and acidic residues predominate over residues 88 to 97 (EDQRSPEAHD). Residues 163 to 280 (ERNVTGLENF…LKIFIFNQTG (118 aa)) enclose the Thioredoxin domain. N-linked (GlcNAc...) asparagine glycans are attached at residues Asn-171, Asn-178, Asn-190, and Asn-277. A helical membrane pass occupies residues 306-326 (VDWLLVFSLFFLISFIMYATI). At 327–344 (RTESIRWLIPGQEQEHAE) the chain is on the cytoplasmic side.

The protein localises to the cell projection. It localises to the cilium membrane. In terms of biological role, acts as a positive regulator of ciliary hedgehog signaling. Required for cilia biogenesis. The polypeptide is Thioredoxin domain-containing protein 15 (Txndc15) (Mus musculus (Mouse)).